The following is a 323-amino-acid chain: HPr kinase/phosphorylase (323 aa).

Active-site residues include His146 and Lys167. An ATP-binding site is contributed by 161–168 (GESGLGKS). Mg(2+) is bound at residue Ser168. Residue Asp185 is the Proton acceptor; for phosphorylation activity. Proton donor; for dephosphorylation activity of the active site. Positions 209-218 (LEVRGLGLLD) are important for the catalytic mechanism of both phosphorylation and dephosphorylation. Residue Glu210 participates in Mg(2+) binding. Arg250 is a catalytic residue. Residues 271-276 (QVAAGR) are important for the catalytic mechanism of dephosphorylation.

Belongs to the HPrK/P family. As to quaternary structure, homohexamer. Requires Mg(2+) as cofactor.

It catalyses the reaction [HPr protein]-L-serine + ATP = [HPr protein]-O-phospho-L-serine + ADP + H(+). The catalysed reaction is [HPr protein]-O-phospho-L-serine + phosphate + H(+) = [HPr protein]-L-serine + diphosphate. Functionally, catalyzes the ATP- as well as the pyrophosphate-dependent phosphorylation of a specific serine residue in HPr, a phosphocarrier protein of the phosphoenolpyruvate-dependent sugar phosphotransferase system (PTS). HprK/P also catalyzes the pyrophosphate-producing, inorganic phosphate-dependent dephosphorylation (phosphorolysis) of seryl-phosphorylated HPr (P-Ser-HPr). The protein is HPr kinase/phosphorylase of Cupriavidus metallidurans (strain ATCC 43123 / DSM 2839 / NBRC 102507 / CH34) (Ralstonia metallidurans).